The following is a 53-amino-acid chain: UPF0391 membrane protein Ent638_0536 (53 aa).

2 helical membrane passes run 4–24 (WGII…GGLA) and 27–47 (AAWA…VSLF).

It belongs to the UPF0391 family.

Its subcellular location is the cell membrane. This Enterobacter sp. (strain 638) protein is UPF0391 membrane protein Ent638_0536.